Consider the following 109-residue polypeptide: Aquaporin-2 (109 aa).

Over 1 to 6 (SIAFSK) the chain is Cytoplasmic. The helical transmembrane segment at 7 to 27 (AVFSEFLATLLFVFFGLGSAL) threads the bilayer. The Extracellular segment spans residues 28 to 35 (NWPQALPS). Residues 36-54 (GLQIAMAFGLAIGTLVQTL) traverse the membrane as a helical segment. The Cytoplasmic portion of the chain corresponds to 55 to 59 (GHISG). Residues 60–69 (AHINPAVTVA) constitute an intramembrane region (discontinuously helical). The short motif at 63–65 (NPA) is the NPA 1 element. The Cytoplasmic segment spans residues 70-80 (CLVGCHVSFLR). A helical transmembrane segment spans residues 81–102 (AIFYVAAQLLGAVAGAALLHEL). Topologically, residues 103-109 (TPPDIRG) are extracellular.

It belongs to the MIP/aquaporin (TC 1.A.8) family. As to quaternary structure, homotetramer. Post-translationally, serine phosphorylation is necessary and sufficient for expression at the apical membrane. Endocytosis is not phosphorylation-dependent. In terms of processing, N-glycosylated.

It is found in the apical cell membrane. Its subcellular location is the basolateral cell membrane. The protein localises to the cell membrane. The protein resides in the cytoplasmic vesicle membrane. It localises to the golgi apparatus. It is found in the trans-Golgi network membrane. The enzyme catalyses H2O(in) = H2O(out). It catalyses the reaction glycerol(in) = glycerol(out). Its function is as follows. Forms a water-specific channel that provides the plasma membranes of renal collecting duct with high permeability to water, thereby permitting water to move in the direction of an osmotic gradient. Plays an essential role in renal water homeostasis. Could also be permeable to glycerol. In Orycteropus afer (Aardvark), this protein is Aquaporin-2.